A 742-amino-acid chain; its full sequence is Phosphoribosylformylglycinamidine synthase subunit PurL (742 aa).

Residue His54 is part of the active site. ATP-binding residues include Tyr57 and Lys96. Glu98 is a binding site for Mg(2+). Substrate contacts are provided by residues 99–102 and Arg121; that span reads SHNH. His100 acts as the Proton acceptor in catalysis. Asp122 provides a ligand contact to Mg(2+). Substrate is bound at residue Gln245. Asp273 is a binding site for Mg(2+). Residue 317–319 participates in substrate binding; that stretch reads ESQ. Asp500 and Gly537 together coordinate ATP. Asn538 serves as a coordination point for Mg(2+). Ser540 is a substrate binding site.

Belongs to the FGAMS family. Monomer. Part of the FGAM synthase complex composed of 1 PurL, 1 PurQ and 2 PurS subunits.

The protein resides in the cytoplasm. It catalyses the reaction N(2)-formyl-N(1)-(5-phospho-beta-D-ribosyl)glycinamide + L-glutamine + ATP + H2O = 2-formamido-N(1)-(5-O-phospho-beta-D-ribosyl)acetamidine + L-glutamate + ADP + phosphate + H(+). The protein operates within purine metabolism; IMP biosynthesis via de novo pathway; 5-amino-1-(5-phospho-D-ribosyl)imidazole from N(2)-formyl-N(1)-(5-phospho-D-ribosyl)glycinamide: step 1/2. Part of the phosphoribosylformylglycinamidine synthase complex involved in the purines biosynthetic pathway. Catalyzes the ATP-dependent conversion of formylglycinamide ribonucleotide (FGAR) and glutamine to yield formylglycinamidine ribonucleotide (FGAM) and glutamate. The FGAM synthase complex is composed of three subunits. PurQ produces an ammonia molecule by converting glutamine to glutamate. PurL transfers the ammonia molecule to FGAR to form FGAM in an ATP-dependent manner. PurS interacts with PurQ and PurL and is thought to assist in the transfer of the ammonia molecule from PurQ to PurL. The protein is Phosphoribosylformylglycinamidine synthase subunit PurL of Geobacillus sp. (strain WCH70).